The primary structure comprises 209 residues: Large ribosomal subunit protein uL3 (209 aa).

Residues 144–165 (GSMGAASDPSRTFKNKKMPGHM) form a disordered region.

It belongs to the universal ribosomal protein uL3 family. In terms of assembly, part of the 50S ribosomal subunit. Forms a cluster with proteins L14 and L19.

One of the primary rRNA binding proteins, it binds directly near the 3'-end of the 23S rRNA, where it nucleates assembly of the 50S subunit. The protein is Large ribosomal subunit protein uL3 of Clostridium novyi (strain NT).